Consider the following 339-residue polypeptide: NADH-quinone oxidoreductase subunit H (339 aa).

Transmembrane regions (helical) follow at residues 10-30 (FPLT…ILCV), 50-70 (PNVV…KLLF), 82-102 (ILFI…WAVI), 115-135 (VGVL…IIAG), 161-181 (MGLV…SGII), 187-207 (LPWW…ISVL), 235-255 (MGFA…SAMT), 275-295 (IPGF…FLWI), and 311-331 (GWKV…SVLF).

This sequence belongs to the complex I subunit 1 family. NDH-1 is composed of 14 different subunits. Subunits NuoA, H, J, K, L, M, N constitute the membrane sector of the complex.

The protein localises to the cell inner membrane. The enzyme catalyses a quinone + NADH + 5 H(+)(in) = a quinol + NAD(+) + 4 H(+)(out). NDH-1 shuttles electrons from NADH, via FMN and iron-sulfur (Fe-S) centers, to quinones in the respiratory chain. The immediate electron acceptor for the enzyme in this species is believed to be ubiquinone. Couples the redox reaction to proton translocation (for every two electrons transferred, four hydrogen ions are translocated across the cytoplasmic membrane), and thus conserves the redox energy in a proton gradient. This subunit may bind ubiquinone. This chain is NADH-quinone oxidoreductase subunit H, found in Rickettsia prowazekii (strain Madrid E).